A 383-amino-acid chain; its full sequence is Succinyl-diaminopimelate desuccinylase (383 aa).

His70 provides a ligand contact to Zn(2+). The active site involves Asp72. Residue Asp103 coordinates Zn(2+). Glu137 serves as the catalytic Proton acceptor. Positions 138, 166, and 352 each coordinate Zn(2+).

It belongs to the peptidase M20A family. DapE subfamily. In terms of assembly, homodimer. Requires Zn(2+) as cofactor. Co(2+) serves as cofactor.

It carries out the reaction N-succinyl-(2S,6S)-2,6-diaminopimelate + H2O = (2S,6S)-2,6-diaminopimelate + succinate. It functions in the pathway amino-acid biosynthesis; L-lysine biosynthesis via DAP pathway; LL-2,6-diaminopimelate from (S)-tetrahydrodipicolinate (succinylase route): step 3/3. Functionally, catalyzes the hydrolysis of N-succinyl-L,L-diaminopimelic acid (SDAP), forming succinate and LL-2,6-diaminopimelate (DAP), an intermediate involved in the bacterial biosynthesis of lysine and meso-diaminopimelic acid, an essential component of bacterial cell walls. In Hahella chejuensis (strain KCTC 2396), this protein is Succinyl-diaminopimelate desuccinylase.